The chain runs to 314 residues: Putative thiamine biosynthesis protein HI_0357 (314 aa).

This sequence belongs to the NMT1/THI5 family.

Probably involved in thiamine biosynthesis. The polypeptide is Putative thiamine biosynthesis protein HI_0357 (Haemophilus influenzae (strain ATCC 51907 / DSM 11121 / KW20 / Rd)).